The chain runs to 500 residues: Lycopene beta cyclase, chloroplastic (500 aa).

The N-terminal 81 residues, 1 to 81, are a transit peptide targeting the chloroplast; it reads MDTLLKTPNK…ELPMYDPSKG (81 aa). NAD(+) is bound at residue 86-114; sequence LAVVGGGPAGLAVAQQVSEAGLSVVSIDP.

Belongs to the lycopene cyclase family.

It is found in the plastid. The protein resides in the chloroplast. The enzyme catalyses a carotenoid psi-end group = a carotenoid beta-end derivative. It functions in the pathway carotenoid biosynthesis; beta-carotene biosynthesis. The protein operates within carotenoid biosynthesis; beta-zeacarotene biosynthesis. Functionally, catalyzes the double cyclization reaction which converts lycopene to beta-carotene and neurosporene to beta-zeacarotene. This chain is Lycopene beta cyclase, chloroplastic (LCY1), found in Nicotiana tabacum (Common tobacco).